The primary structure comprises 512 residues: mRNA export factor (512 aa).

A compositionally biased stretch (low complexity) spans Met-1 to Leu-15. Residues Met-1–Asp-243 form a disordered region. The Nuclear export signal motif lies at Ile-5–Asp-17. Phosphoserine; by host occurs at positions 16 and 18. 2 stretches are compositionally biased toward acidic residues: residues Ser-16–Glu-26 and Leu-35–Glu-51. An interaction with host ALYREF region spans residues Val-104–Arg-112. Residues Ala-110–Arg-138 carry the Nuclear localization signal motif. At Ser-114 the chain carries Phosphoserine; by host. Arg-138 is modified (dimethylated arginine; by host). The interval Arg-138–Gly-152 is RGG-box. A compositionally biased stretch (basic residues) spans Gly-139–Gly-149. The residue at position 148 (Arg-148) is an Omega-N-methylarginine; by host. Arg-150 carries the dimethylated arginine; by host modification. Residues Ala-214–Pro-233 show a composition bias toward pro residues. 4 residues coordinate Zn(2+): Cys-400, His-479, Cys-483, and Cys-488. The CHC2-type zinc-finger motif lies at Cys-400 to Cys-488. An important for homodimerization region spans residues Tyr-500–Phe-512.

It belongs to the HHV-1 ICP27 protein family. In terms of assembly, homodimer. Interacts with host RBP1; this interaction facilitates the RNA polymerase recruitment to viral transcription sites. Interacts (via the RGG box) with host ALYREF/THOC4; this interaction recruits ALYREF to viral replication compartments and probably directs viral mRNA to the TAP/NFX1 pathway. Interacts with host ALYREF2. Interacts (via the RGG box) with host SRPK1; this interaction relocalizes SRPK1 to the nucleus and seems to alter its activity. Interacts with ICP4; this interaction modulates ICP4 DNA-binding activity. Interacts with host NXF1; this interaction allows efficient export of HHV-1 early and late transcripts. Post-translationally, methylated within the RGG box possibly by host PRMT1. When hypomethylated, ICP27 is exported to the cytoplasm earlier and more rapidly. Phosphorylated.

The protein localises to the host cytoplasm. It is found in the host nucleus. Multifunctional regulator of the expression of viral genes that contributes to the shutoff of host protein synthesis and mediates nuclear export of viral intronless mRNAs. Early in infection, this immediate early (EI) protein mediates the inhibition of cellular splicing. This results in the accumulation of unprocessed 3'end pre-mRNAs which can't be exported from the nucleus. Cellular protein synthesis is thereby shut off early after virus infection. Later in the infection, it helps recruit cellular RNA polymerase II to viral replication sites and promotes the nuclear export of viral intronless mRNAs by interacting with mRNAs and host NXF1/TAP. ICP27 binds to NUP62 which may provide facilitated viral mRNA export and may indirectly compete with some host cell transport receptors for binding and inhibit cellular nucleocytoplasmic transport pathways. Also stimulates translation of viral transcripts. Repression of host gene expression blocks the cell cycle at the G1 phase and prevents apoptosis. Seems to silence the 3' splice site of the promyelocytic leukemia (PML) intron 7a, thereby switching PML isoforms from PML-II to PML-V. This could be linked to the accelerated mRNA export induced by ICP27 which might not provide sufficient time for PML pre-mRNA to be spliced in the nucleus. This chain is mRNA export factor, found in Homo sapiens (Human).